We begin with the raw amino-acid sequence, 258 residues long: Phycoerythrobilin:ferredoxin oxidoreductase (258 aa).

The protein belongs to the HY2 family.

It carries out the reaction (3Z)-phycoerythrobilin + oxidized 2[4Fe-4S]-[ferredoxin] = 15,16-dihydrobiliverdin + reduced 2[4Fe-4S]-[ferredoxin] + 2 H(+). In terms of biological role, catalyzes the two-electron reduction of the C2 and C3(1) diene system of 15,16-dihydrobiliverdin. In Prochlorococcus marinus (strain NATL1A), this protein is Phycoerythrobilin:ferredoxin oxidoreductase.